Reading from the N-terminus, the 171-residue chain is Adenine phosphoribosyltransferase (171 aa).

The protein belongs to the purine/pyrimidine phosphoribosyltransferase family. As to quaternary structure, homodimer.

Its subcellular location is the cytoplasm. The catalysed reaction is AMP + diphosphate = 5-phospho-alpha-D-ribose 1-diphosphate + adenine. The protein operates within purine metabolism; AMP biosynthesis via salvage pathway; AMP from adenine: step 1/1. Functionally, catalyzes a salvage reaction resulting in the formation of AMP, that is energically less costly than de novo synthesis. The chain is Adenine phosphoribosyltransferase from Shouchella clausii (strain KSM-K16) (Alkalihalobacillus clausii).